The chain runs to 324 residues: Glyoxylate/hydroxypyruvate reductase B (324 aa).

Residues R237 and E266 contribute to the active site. H285 serves as the catalytic Proton donor.

The protein belongs to the D-isomer specific 2-hydroxyacid dehydrogenase family. GhrB subfamily. Homodimer.

It localises to the cytoplasm. The enzyme catalyses glycolate + NADP(+) = glyoxylate + NADPH + H(+). The catalysed reaction is (R)-glycerate + NAD(+) = 3-hydroxypyruvate + NADH + H(+). It carries out the reaction (R)-glycerate + NADP(+) = 3-hydroxypyruvate + NADPH + H(+). Functionally, catalyzes the NADPH-dependent reduction of glyoxylate and hydroxypyruvate into glycolate and glycerate, respectively. The polypeptide is Glyoxylate/hydroxypyruvate reductase B (Escherichia coli O9:H4 (strain HS)).